The chain runs to 117 residues: Immunoglobulin heavy variable 3-21 (117 aa).

An N-terminal signal peptide occupies residues 1-19; sequence MELGLRWVFLVAILEGVQC. The segment at 20–44 is framework-1; it reads EVQLVESGGGLVKPGGSLRLSCAAS. The 98-residue stretch at 20–117 folds into the Ig-like domain; the sequence is EVQLVESGGG…EDTAVYYCAR (98 aa). An intrachain disulfide couples Cys41 to Cys115. The tract at residues 45 to 52 is complementarity-determining-1; that stretch reads GFTFSSYS. Residues 53 to 69 are framework-2; that stretch reads MNWVRQAPGKGLEWVSS. The interval 70-77 is complementarity-determining-2; the sequence is ISSSSSYI. The framework-3 stretch occupies residues 78-115; it reads YYADSVKGRFTISRDNAKNSLYLQMNSLRAEDTAVYYC. The complementarity-determining-3 stretch occupies residues 116-117; it reads AR.

As to quaternary structure, immunoglobulins are composed of two identical heavy chains and two identical light chains; disulfide-linked.

Its subcellular location is the secreted. The protein localises to the cell membrane. Functionally, v region of the variable domain of immunoglobulin heavy chains that participates in the antigen recognition. Immunoglobulins, also known as antibodies, are membrane-bound or secreted glycoproteins produced by B lymphocytes. In the recognition phase of humoral immunity, the membrane-bound immunoglobulins serve as receptors which, upon binding of a specific antigen, trigger the clonal expansion and differentiation of B lymphocytes into immunoglobulins-secreting plasma cells. Secreted immunoglobulins mediate the effector phase of humoral immunity, which results in the elimination of bound antigens. The antigen binding site is formed by the variable domain of one heavy chain, together with that of its associated light chain. Thus, each immunoglobulin has two antigen binding sites with remarkable affinity for a particular antigen. The variable domains are assembled by a process called V-(D)-J rearrangement and can then be subjected to somatic hypermutations which, after exposure to antigen and selection, allow affinity maturation for a particular antigen. This Homo sapiens (Human) protein is Immunoglobulin heavy variable 3-21.